The primary structure comprises 371 residues: 43 kDa relaxation protein (371 aa).

Disordered stretches follow at residues 1–46 (MASY…GNMP), 150–172 (KEPD…AKNT), 196–221 (RVDS…GQVQ), 263–291 (SERD…FDFE), and 328–371 (IHQE…SFSR). The span at 22 to 42 (YIAREGKYAREKDSDLEHKES) shows a compositional bias: basic and acidic residues. Over residues 157 to 168 (QKRHVSGKHRPN) the composition is skewed to basic residues. Positions 196 to 215 (RVDSRSLKAQGIDREPERHL) are enriched in basic and acidic residues. Residues 330–365 (QEMERQRERERLAEKQRQQEKERQRLAEQIRQKPDK) show a composition bias toward basic and acidic residues.

It belongs to the MobA/MobL family.

Its function is as follows. This protein is probably required for relaxation complex formation. The chain is 43 kDa relaxation protein from Salmonella typhimurium.